A 208-amino-acid chain; its full sequence is MSETGATPTAARTARMERTTSESSVLVEINLDGSGVSDISTSVPFYDHMLTALCKHSLIDMTVKATGDTHIDAHHTVEDVAITFGEVLRQALGNKAGIRRFGEATVPLDEALAHAVVDVSGRPYLVHGGEPAGQEYHLIGGHFTGSLTRHVFEAITLHAGICLHMNVLAGRDPHHIVEAQFKAFARALRAAVESDPRVEGIPSTKGAL.

The protein belongs to the imidazoleglycerol-phosphate dehydratase family.

Its subcellular location is the cytoplasm. The enzyme catalyses D-erythro-1-(imidazol-4-yl)glycerol 3-phosphate = 3-(imidazol-4-yl)-2-oxopropyl phosphate + H2O. Its pathway is amino-acid biosynthesis; L-histidine biosynthesis; L-histidine from 5-phospho-alpha-D-ribose 1-diphosphate: step 6/9. In Paenarthrobacter aurescens (strain TC1), this protein is Imidazoleglycerol-phosphate dehydratase.